The following is a 216-amino-acid chain: Imidazoleglycerol-phosphate dehydratase (216 aa).

Serine 211 bears the Phosphoserine mark.

Belongs to the imidazoleglycerol-phosphate dehydratase family.

It catalyses the reaction D-erythro-1-(imidazol-4-yl)glycerol 3-phosphate = 3-(imidazol-4-yl)-2-oxopropyl phosphate + H2O. The protein operates within amino-acid biosynthesis; L-histidine biosynthesis; L-histidine from 5-phospho-alpha-D-ribose 1-diphosphate: step 6/9. The protein is Imidazoleglycerol-phosphate dehydratase (his5) of Schizosaccharomyces pombe (strain 972 / ATCC 24843) (Fission yeast).